Reading from the N-terminus, the 2114-residue chain is Protein CELLULOSE SYNTHASE INTERACTIVE 2 (2114 aa).

ARM repeat units lie at residues 2-42 (TSEM…LLGL), 46-87 (KKEC…VLCK), 89-128 (KNVR…EVSL), 135-177 (NVGT…NLCG), 180-219 (DGFW…RLIR), 222-262 (TSSI…AITS), 265-305 (EEAI…SYGT), 354-394 (GDTR…SLFG), 396-435 (VDLS…NLCK), 479-519 (EESR…NLCC), 522-561 (EEIR…KLIK), 563-595 (ADPS…HVLA), 601-640 (EFVT…DLFS), 643-682 (KDLC…SLSN), 708-750 (AKTN…RVLR), 774-816 (SDVF…LLAK), 825-865 (HNPF…RFCK), 870-910 (LLGR…CAAK), 914-953 (TLWA…IQRP), 994-1033 (PSNR…KWIA), 1044-1083 (PKVV…ALVR), 1087-1128 (DKTI…LVQN), 1141-1182 (ERVR…RIAD), 1185-1225 (DLSK…SLFR), 1227-1264 (PEIT…LCEL), 1265-1304 (FSSE…ALVK), 1312-1353 (RPDI…FLFT), 1355-1394 (EGLR…RLLD), 1396-1435 (KRFV…KMAK), 1454-1494 (ISQL…MVQP), 1496-1525 (LLIL…KPMV), 1526-1564 (LESL…SLLE), 1566-1605 (QRFQ…RSSV), 1606-1648 (TWPK…NILR), 1650-1689 (NPEH…ENQD), 1690-1730 (SSSV…RNPK), 1732-1771 (RETK…DISQ), 1772-1813 (HEGL…NFAM), 1816-1855 (RTSR…SLFS), 1857-1898 (HTLQ…TILT), 1901-1940 (PKLR…TLRQ), and 1949-1993 (TARS…CLPG). Residues 1974 to 2087 (SPAPSSFHER…LSEGSYSGIF (114 aa)) form the C2 domain.

Associates with cellulase synthase (CESA) complexes. Binds to cortical microtubules.

The protein localises to the cell membrane. The protein resides in the cytoplasm. It is found in the cytoskeleton. Regulator of the microtubular cytoskeleton. Microtubule-associated protein involved in the association of cellulase synthase (CESA) complexes (CSCs) and cortical microtubules. Promotes dynamics of CSCs in the plasma membrane. Regulates primary cell wall biosynthesis and cellulose microfibrils organization. This chain is Protein CELLULOSE SYNTHASE INTERACTIVE 2, found in Arabidopsis thaliana (Mouse-ear cress).